The following is a 2024-amino-acid chain: Pericentriolar material 1 protein (2024 aa).

The disordered stretch occupies residues 1-92 (MATGGGPFED…FPHSRYMSQM (92 aa)). Ala-2 carries the N-acetylalanine modification. The segment at 2 to 1460 (ATGGGPFEDG…TWIASNSELT (1459 aa)) is mediates interaction with DZIP1. Residues 43-61 (RSSEKNKKKFGVESDKRVT) show a composition bias toward basic and acidic residues. A phosphoserine mark is found at Ser-65, Ser-68, Ser-69, Ser-93, Ser-110, Ser-116, and Ser-119. The segment at 111–163 (DLDQRSIGSDSQGRATAANNKRQLSENRKPFNFLPMQINTNKSKDASTNPPNR) is disordered. 2 stretches are compositionally biased toward polar residues: residues 116 to 132 (SIGS…NNKR) and 147 to 163 (QINT…PPNR). Asn-159 is subject to Phosphoserine; in variant Ser-159. Residues 218-301 (KASSMREDLV…QLRALQGRQA (84 aa)) are a coiled coil. Residues 354–392 (RDSQPPAVPDNRRQAESLSLTREVSQSRKPSASERLPDE) form a disordered region. The span at 369–383 (ESLSLTREVSQSRKP) shows a compositional bias: polar residues. Phosphoserine is present on Ser-370. Position 372 is a phosphoserine; by PLK4 (Ser-372). Ser-384 is modified (phosphoserine). Lys-399 bears the N6-acetyllysine mark. Residues 400 to 424 (MRVLQEKKQKMDKLLGELHTLRDQH) adopt a coiled-coil conformation. Disordered stretches follow at residues 421 to 492 (RDQH…KLQK) and 523 to 548 (ENRK…VTNI). 2 stretches are compositionally biased toward polar residues: residues 425–445 (LNNS…SAPS) and 456–477 (GESN…SQNE). The stretch at 487–543 (SEKLQKLNEVRKRLNELRELVHYYEQTSDMMTDAVNENRKDEETEESEYDSEHENSE) forms a coiled coil. Position 588 is a phosphoserine (Ser-588). Disordered stretches follow at residues 614–652 (HVAQ…HPED) and 699–726 (FYPA…DTGV). Positions 618-632 (GEDDEEEEEEAEEEG) are enriched in acidic residues. The segment covering 634–643 (SGASLSSHRS) has biased composition (low complexity). Ser-643 carries the phosphoserine modification. Residues 651-682 (EDAEFEQKINRLMAAKQKLRQLQDLVAMVQDD) are a coiled coil. Positions 708 to 719 (QNSNNTRGNANK) are enriched in polar residues. Coiled coils occupy residues 726–769 (VNEK…LQTA) and 824–858 (SEMR…GLAE). Thr-859 carries the post-translational modification Phosphothreonine. Phosphoserine is present on residues Ser-861, Ser-866, Ser-869, and Ser-872. Thr-877 is modified (phosphothreonine). The disordered stretch occupies residues 915–947 (TDEEEEEEQDASSNDNFSVCPSNSVNHNSYNGK). The span at 925–946 (ASSNDNFSVCPSNSVNHNSYNG) shows a compositional bias: polar residues. Ser-960, Ser-977, Ser-988, and Ser-991 each carry phosphoserine. The stretch at 1063–1089 (TQLTWQQNNVQRLKQMLNELMRQQNQH) forms a coiled coil. 2 disordered regions span residues 1085–1109 (QQNQ…PSPS) and 1152–1211 (FSQN…RTPW). The span at 1089-1099 (HPEKPGGKERG) shows a compositional bias: basic and acidic residues. The span at 1152–1173 (FSQNISTPSEQQQPLAQNSSGK) shows a compositional bias: polar residues. 2 positions are modified to phosphoserine: Ser-1185 and Ser-1188. Residues 1192–1201 (EKPRNKKLPE) are compositionally biased toward basic and acidic residues. Phosphoserine occurs at positions 1229 and 1231. The segment covering 1232-1246 (VEKSTSSNRKNQLDT) has biased composition (polar residues). Residues 1232–1342 (VEKSTSSNRK…RHSAQTEEPV (111 aa)) are disordered. Phosphoserine is present on residues Ser-1257, Ser-1260, Ser-1262, and Ser-1263. An interaction with HAP1 region spans residues 1279–1799 (TRKASAQASL…TQALTNYGSG (521 aa)). Over residues 1296 to 1313 (KSKSKKRNSTQLKSRVKN) the composition is skewed to basic residues. A phosphoserine mark is found at Ser-1318 and Ser-1320. At Thr-1468 the chain carries Phosphothreonine. Positions 1515-1539 (IHLDQALARMREYERMKTEAESNSN) form a coiled coil. Ser-1573, Ser-1697, Ser-1730, Ser-1765, Ser-1768, Ser-1776, and Ser-1782 each carry phosphoserine. Disordered regions lie at residues 1725-1868 (LEDH…NNCP) and 1880-1944 (EQPL…PVLV). Residues 1768–1777 (SDQEEDEESE) are compositionally biased toward acidic residues. Over residues 1783–1797 (INLSKAETQALTNYG) the composition is skewed to polar residues. Positions 1799–1815 (GEDENEDEEMEEFEEGP) are enriched in acidic residues. Over residues 1818 to 1827 (VQTSLQANTE) the composition is skewed to polar residues. Residues 1835 to 1860 (DEQVLQRDFKKTAESKNVPLEREATS) show a composition bias toward basic and acidic residues. Positions 1905 to 1916 (PLRLPEMEPLVP) are enriched in low complexity. The interaction with BBS4 stretch occupies residues 1913–2024 (PLVPRVKEVK…EPETVGAQSI (112 aa)). Residues 1924–1933 (AQETPESSLA) are compositionally biased toward polar residues. Phosphoserine is present on residues Ser-1958 and Ser-1977. The segment at 2005–2024 (ELAGNSETLKEPETVGAQSI) is disordered.

This sequence belongs to the PCM1 family. As to quaternary structure, self-associates. Interacts with C2CD3. Interacts with BBS4, BBS8, CETN3, HAP1, NDE1, NDEL1, MAP1LC3B, GABARAPAL2, and GABARAP. Interacts with CEP131; the interaction increases in response to ultraviolet light (UV) radiation. Associates with microtubule; association to microtubule is reduced in response to cellular stress, such as ultraviolet light (UV) radiation or heat shock, in a process that requires p38 MAP kinase signaling. Interacts with CFAP263. Interacts with SSX2IP. Interacts with CCDC13. Interacts with CEP290. Interacts with PARD6A. Interacts with KIAA0753/OFIP, CEP20/FOR20 and OFD1; the interaction with CEP20/FOR20 and OFD1 may be mediated by KIAA0753/OFIP. Interacts with CCDC66. Interacts with CCDC61. Interacts with DZIP1; localizes DZIP1 and the associated BBSome to centriolar satellite. Interacts with CSTPP1, TTLL1, TPGS1 and LRRC49. Interacts with CFAP53. In terms of processing, ubiquitinated. Undergoes monoubiquitination catalyzed by the E3 ubiquitin-protein ligase MIB1 in proliferating cells, preventing cilia formation. Monoubiquitination by MIB1 is inhibited in response to cellular stress, such as ultraviolet light (UV) radiation or heat shock, resulting in cilia formation initiation. Post-translationally, variant Ser-159 is phosphorylated. Phosphorylated on multiple serine and threonine residues by DYRK3 during the G2-to-M transition, after the nuclear-envelope breakdown. Phosphorylation by DYRK3 promotes disassembly of pericentriolar material. Phosphorylation at Ser-372 mediated by PLK4 is required to maintain the integrity of centriolar satellites. Expressed in blood, bone marrow, breast, lymph node, ovary and thyroid.

It is found in the cytoplasm. The protein resides in the cytoskeleton. It localises to the microtubule organizing center. The protein localises to the centrosome. Its subcellular location is the cytoplasmic granule. It is found in the centriolar satellite. The protein resides in the cilium basal body. Functionally, required for centrosome assembly and function. Essential for the correct localization of several centrosomal proteins including CEP250, CETN3, PCNT and NEK2. Required to anchor microtubules to the centrosome. Also involved in cilium biogenesis by recruiting the BBSome, a ciliary protein complex involved in cilium biogenesis, to the centriolar satellites. Recruits the tubulin polyglutamylase complex (TPGC) to centriolar satellites. This chain is Pericentriolar material 1 protein, found in Homo sapiens (Human).